The sequence spans 513 residues: MSDYSLKHSVTQYLEEIPQQVQNRLYTSPATCLAIYRILPPLAKFFIMAMVFNENEVPLLDLDKWVNSNGKLQFQNAIKSMKSLHLLIPNKSSGTLMINLNPTFKISLRNALTGGEVQNSFGVVVEENVVSLDLLDEYSANKWETILHFMVGTPLAKIPSEKVLNLLKHSKLMEEVNSTGEFKITNEGFQFLLQEINSQLWTLLLQYLKMIETSKMDLVDVLHFIFMLGALEVGKAYKIDALSETQRIMLQDMRDYGLVFQKHSNDSIFYPTKLALMLTSDTKTIRSASNAMDSVLRQNREEPSVNEDGANGKSTTDITTSDDLNKAGLKNQDIPDGSLIVETNFKIYSYSNSPLQIAVLSLFVHLKARFVNMVLGQITRESIRRALTNGITADQIIAYLETHAHPQMRRLAEEKLEKKLELDPNCKEPLQVLPPTVVDQIRLWQLELDRVITYEGSLYSDFETSQEYNLLSKYAQDIGVLLWKDDKKKKFFISKEGNSQVLDFAKRKLKKKQ.

A disordered region spans residues 296 to 319 (LRQNREEPSVNEDGANGKSTTDIT).

It belongs to the TFB2 family. In terms of assembly, component of the 7-subunit TFIIH core complex composed of XPB/SSL2, XPD/RAD3, SSL1, TFB1, TFB2, TFB4 and TFB5, which is active in NER. The core complex associates with the 3-subunit CTD-kinase module TFIIK composed of CCL1, KIN28 and TFB3 to form the 10-subunit holoenzyme (holo-TFIIH) active in transcription. An additionnal subunit, TFB6, plays a role in the dissociation of the SSL2 helicase from TFIIH after transcription initiation. Interacts with TFB5.

It localises to the nucleus. Functionally, component of the general transcription and DNA repair factor IIH (TFIIH) core complex, which is involved in general and transcription-coupled nucleotide excision repair (NER) of damaged DNA and, when complexed to TFIIK, in RNA transcription by RNA polymerase II. In NER, TFIIH acts by opening DNA around the lesion to allow the excision of the damaged oligonucleotide and its replacement by a new DNA fragment. In transcription, TFIIH has an essential role in transcription initiation. When the pre-initiation complex (PIC) has been established, TFIIH is required for promoter opening and promoter escape. Phosphorylation of the C-terminal tail (CTD) of the largest subunit of RNA polymerase II by the kinase module TFIIK controls the initiation of transcription. The polypeptide is General transcription and DNA repair factor IIH subunit TFB2 (TFB2) (Saccharomyces cerevisiae (strain ATCC 204508 / S288c) (Baker's yeast)).